Reading from the N-terminus, the 152-residue chain is Anaerobic nitrite reductase HBI (152 aa).

Residues 2–151 (ALTEKQEALL…LVATIKAEMK (150 aa)) form the Globin domain. The Homodimerization motif lies at 35–39 (EAAPE). Positions 45, 59, 63, 93, and 98 each coordinate heme b. The Homodimerization signature appears at 105–117 (DPHFEVMKGALLG).

It belongs to the plant globin family. As to quaternary structure, homodimer. The cofactor is heme b. As to expression, root nodules.

It localises to the cytoplasm. The protein localises to the nucleus. The catalysed reaction is Fe(III)-heme b-[protein] + nitric oxide + H2O = Fe(II)-heme b-[protein] + nitrite + 2 H(+). Its function is as follows. Phytoglobin that reduces nitrite to nitric oxide (NO) under anoxic conditions (e.g. during flooding or in waterlogged soil) and upon root nodulation. Required for general plant development and during nodulation, especially for the onset of symbiosis. Monitors nitric oxide (NO) levels during early phase of the nitrogen-fixing symbiosis and buffers oxygen in functioning nodules. May not function as an oxygen storage or transport protein. Has an unusually high affinity for O(2) through a hexacoordinate heme iron because of a very low dissociation constant. This chain is Anaerobic nitrite reductase HBI, found in Casuarina glauca (Swamp oak).